We begin with the raw amino-acid sequence, 119 residues long: Ribonuclease P protein component (119 aa).

The protein belongs to the RnpA family. In terms of assembly, consists of a catalytic RNA component (M1 or rnpB) and a protein subunit.

It catalyses the reaction Endonucleolytic cleavage of RNA, removing 5'-extranucleotides from tRNA precursor.. Its function is as follows. RNaseP catalyzes the removal of the 5'-leader sequence from pre-tRNA to produce the mature 5'-terminus. It can also cleave other RNA substrates such as 4.5S RNA. The protein component plays an auxiliary but essential role in vivo by binding to the 5'-leader sequence and broadening the substrate specificity of the ribozyme. This chain is Ribonuclease P protein component, found in Streptococcus pyogenes serotype M12 (strain MGAS2096).